The following is a 320-amino-acid chain: Annexin A5 (320 aa).

Ala2 bears the N-acetylalanine mark. Annexin repeat units follow at residues Phe15–Lys86, Pro87–Gln158, Ala170–Lys242, and Ser246–Gly317. Lys29 participates in a covalent cross-link: Glycyl lysine isopeptide (Lys-Gly) (interchain with G-Cter in SUMO1); alternate. Lys29 is covalently cross-linked (Glycyl lysine isopeptide (Lys-Gly) (interchain with G-Cter in SUMO2); alternate). Residue Ser37 is modified to Phosphoserine. Residues Lys70, Lys76, Lys79, Lys97, and Lys101 each carry the N6-acetyllysine modification. Residue Lys290 is modified to N6-succinyllysine. A [IL]-x-C-x-x-[DE] motif motif is present at residues Leu314–Asp320.

It belongs to the annexin family. In terms of assembly, monomer. Binds ATRX and EIF5B. S-nitrosylation is induced by interferon-gamma and oxidatively-modified low-densitity lipoprotein (LDL(ox)) possibly implicating the iNOS-S100A8/9 transnitrosylase complex.

In terms of biological role, this protein is an anticoagulant protein that acts as an indirect inhibitor of the thromboplastin-specific complex, which is involved in the blood coagulation cascade. The polypeptide is Annexin A5 (ANXA5) (Macaca fascicularis (Crab-eating macaque)).